The following is a 291-amino-acid chain: Cytochrome c-552 (291 aa).

The signal sequence occupies residues 1–23 (MKKTLMASAVGAVIAFGTHGAMA). Residues cysteine 68, cysteine 71, histidine 72, cysteine 157, cysteine 161, and histidine 162 each contribute to the heme c site.

In terms of processing, binds 2 heme c groups per subunit.

It is found in the periplasm. Its function is as follows. May play a role in nitrite reduction. Shows peroxidase activity on proteolytic modification. The sequence is that of Cytochrome c-552 (nirB) from Stutzerimonas stutzeri (Pseudomonas stutzeri).